The primary structure comprises 61 residues: U-scoloptoxin(14)-Sm1a (61 aa).

Positions 1 to 24 (MNPKLCMLLLVCLMAFYVIETVQA) are cleaved as a signal peptide.

The protein belongs to the scoloptoxin-14 family. Post-translationally, contains 4 disulfide bonds. In terms of tissue distribution, expressed by the venom gland.

The protein localises to the secreted. In Scolopendra morsitans (Tanzanian blue ringleg centipede), this protein is U-scoloptoxin(14)-Sm1a.